The primary structure comprises 154 residues: Superoxide dismutase [Cu-Zn] (154 aa).

His47, His49, and His64 together coordinate Cu cation. Cys58 and Cys147 form a disulfide bridge. Residues His64, His72, His81, and Asp84 each coordinate Zn(2+). Residue His121 participates in Cu cation binding.

Belongs to the Cu-Zn superoxide dismutase family. In terms of assembly, homodimer. It depends on Cu cation as a cofactor. Zn(2+) serves as cofactor.

It is found in the cytoplasm. The catalysed reaction is 2 superoxide + 2 H(+) = H2O2 + O2. Functionally, destroys radicals which are normally produced within the cells and which are toxic to biological systems. The protein is Superoxide dismutase [Cu-Zn] (SODCC) of Pinus sylvestris (Scotch pine).